The sequence spans 187 residues: Large ribosomal subunit protein uL5 (187 aa).

Belongs to the universal ribosomal protein uL5 family. As to quaternary structure, part of the 50S ribosomal subunit; part of the 5S rRNA/L5/L18/L25 subcomplex. Contacts the 5S rRNA and the P site tRNA. Forms a bridge to the 30S subunit in the 70S ribosome.

In terms of biological role, this is one of the proteins that bind and probably mediate the attachment of the 5S RNA into the large ribosomal subunit, where it forms part of the central protuberance. In the 70S ribosome it contacts protein S13 of the 30S subunit (bridge B1b), connecting the 2 subunits; this bridge is implicated in subunit movement. Contacts the P site tRNA; the 5S rRNA and some of its associated proteins might help stabilize positioning of ribosome-bound tRNAs. The polypeptide is Large ribosomal subunit protein uL5 (Nocardia farcinica (strain IFM 10152)).